The chain runs to 581 residues: Adenine deaminase (581 aa).

It belongs to the metallo-dependent hydrolases superfamily. Adenine deaminase family. It depends on Mn(2+) as a cofactor.

It catalyses the reaction adenine + H2O + H(+) = hypoxanthine + NH4(+). In Brucella melitensis biotype 1 (strain ATCC 23456 / CCUG 17765 / NCTC 10094 / 16M), this protein is Adenine deaminase.